The chain runs to 107 residues: HTH-type transcriptional regulator Rv2034 (107 aa).

The region spanning 1–93 (MSTYRSPDRA…DLDRFWTRAL (93 aa)) is the HTH arsR-type domain. The segment at residues 33–56 (VGELARDLPVSRPAVSQHLKVLKT) is a DNA-binding region (H-T-H motif).

As to quaternary structure, homodimer.

Its activity is regulated as follows. DNA-binding ability is not susceptible to zinc, nickel, cobalt, cadmium, lead, copper and manganese ions. In terms of biological role, involved in the regulation of lipid metabolism and hypoxic response. Positively regulates transcription of various genes, such as phoP, groEL2 and dosR. Negatively regulates its own transcription. Acts by binding to a specific palindromic sequence motif in promoter regions. This is HTH-type transcriptional regulator Rv2034 from Mycobacterium tuberculosis (strain ATCC 25618 / H37Rv).